We begin with the raw amino-acid sequence, 144 residues long: MLERETQSLEYRKEQLENKVAWLEKRVKEKEEFKKTIHAEIKSGVEPELNKLKAKADTIFEEAKRATELRDKIVAEIKEIVEVLSKLLEASEKLEGEIEEEKKVKEKLEKETEEPKMELFKPRTISLLEAIKIWGSQTEKTGEN.

Positions 48 to 119 (ELNKLKAKAD…KETEEPKMEL (72 aa)) form a coiled coil.

This is an uncharacterized protein from Archaeoglobus fulgidus (strain ATCC 49558 / DSM 4304 / JCM 9628 / NBRC 100126 / VC-16).